The sequence spans 313 residues: Porphobilinogen deaminase (313 aa).

Cys-242 carries the post-translational modification S-(dipyrrolylmethanemethyl)cysteine.

Belongs to the HMBS family. In terms of assembly, monomer. Dipyrromethane serves as cofactor.

The enzyme catalyses 4 porphobilinogen + H2O = hydroxymethylbilane + 4 NH4(+). It participates in porphyrin-containing compound metabolism; protoporphyrin-IX biosynthesis; coproporphyrinogen-III from 5-aminolevulinate: step 2/4. In terms of biological role, tetrapolymerization of the monopyrrole PBG into the hydroxymethylbilane pre-uroporphyrinogen in several discrete steps. The protein is Porphobilinogen deaminase of Enterobacter sp. (strain 638).